The chain runs to 539 residues: Inositol 1,4,5-trisphosphate receptor-interacting protein (539 aa).

Positions 1-24 (MQGAIARVCMVVVAAILNHPLLFP) are cleaved as a signal peptide. Residues 25-71 (NENTTVPEQDEDLLARMKEHQEKLEAEQKRLEQEISQNETSVIGDQD) are Extracellular-facing. 2 N-linked (GlcNAc...) asparagine glycosylation sites follow: N27 and N62. A coiled-coil region spans residues 32–68 (EQDEDLLARMKEHQEKLEAEQKRLEQEISQNETSVIG). Residues 72–92 (GYGWYFWSALCLVIFFTIEVC) form a helical membrane-spanning segment. Topologically, residues 93–539 (RQDLISAEIP…RHEFSSAEQI (447 aa)) are cytoplasmic.

This sequence belongs to the ITPRIP family.

The protein localises to the cell membrane. Its subcellular location is the nucleus outer membrane. Functionally, enhances Ca(2+)-mediated inhibition of inositol 1,4,5-triphosphate receptor (ITPR) Ca(2+) release. In Danio rerio (Zebrafish), this protein is Inositol 1,4,5-trisphosphate receptor-interacting protein (itprip).